The chain runs to 503 residues: Methylthioalkylmalate synthase 3, chloroplastic (503 aa).

A chloroplast-targeting transit peptide spans 1-51 (MASLLLTSSSMITTSCRSMVLRSGLPIGSSFPSLRLTRPYDKATLFVSCCS). The region spanning 85–359 (VRVLDTTLRD…YTKIDSRQIM (275 aa)) is the Pyruvate carboxyltransferase domain.

It belongs to the alpha-IPM synthase/homocitrate synthase family. It depends on Mn(2+) as a cofactor. In terms of tissue distribution, highly expressed in roots, leaves, and siliques. Lower amounts in stems and flowers.

It is found in the plastid. The protein resides in the chloroplast. It catalyses the reaction an omega-(methylsulfanyl)-2-oxoalkanoate + acetyl-CoA + H2O = a 2-(omega-methylsulfanyl)alkylmalate + CoA + H(+). Its activity is regulated as follows. Not activated by ATP. Its function is as follows. Determines the side chain length of aliphatic glucosinolate structures. Accepts all the omega-methylthio-2-oxoalkanoic acids needed to form the known C3 to C8 glucosinolates. Also able to convert pyruvate to citramalate, 2-oxoisovalerate to isopropylmalate, 4-methyl-2-oxopentanoate and 5-methyl-2-oxohexanoate for Leu-derived glucosinolates, 3-methyl-2-oxopentanoate for Ile-derived glucosinolates and phenylpyruvate to phenylethylglucosinolate. The protein is Methylthioalkylmalate synthase 3, chloroplastic (MAM3) of Arabidopsis thaliana (Mouse-ear cress).